The primary structure comprises 1274 residues: Clustered mitochondria protein homolog (1274 aa).

The disordered stretch occupies residues 1 to 53 (MAQTNGELEHSKGMSSPAVRISQAQKSTKLTVDPESPEQVANGTHAEGEQPEE). TPR repeat units lie at residues 293–326 (SPSF…PNNP), 510–543 (DYGG…KKHP), and 628–661 (AKEA…ERVD). Residues 342–586 (DITRSQENYL…RVTPLDVMWQ (245 aa)) form the Clu domain. 2 disordered regions span residues 631 to 655 (AAKK…EEAL) and 893 to 925 (VSNG…ARAA). TPR repeat units lie at residues 998–1031 (AKLY…TERT), 1040–1073 (ILSY…WKII), 1082–1115 (ITTM…CESL), and 1124–1157 (ATIL…FLQQ). The tract at residues 1197-1274 (INMTPRTLGT…KLRGSKKSSA (78 aa)) is disordered. Residues 1200–1217 (TPRTLGTRVQPQVGQTAP) show a composition bias toward polar residues.

This sequence belongs to the CLU family. As to quaternary structure, may associate with the eukaryotic translation initiation factor 3 (eIF-3) complex.

Its subcellular location is the cytoplasm. MRNA-binding protein involved in proper cytoplasmic distribution of mitochondria. The chain is Clustered mitochondria protein homolog from Aspergillus terreus (strain NIH 2624 / FGSC A1156).